A 480-amino-acid chain; its full sequence is 3-isopropylmalate dehydratase large subunit (480 aa).

Residues cysteine 361, cysteine 421, and cysteine 424 each contribute to the [4Fe-4S] cluster site.

The protein belongs to the aconitase/IPM isomerase family. LeuC type 1 subfamily. As to quaternary structure, heterodimer of LeuC and LeuD. [4Fe-4S] cluster serves as cofactor.

It carries out the reaction (2R,3S)-3-isopropylmalate = (2S)-2-isopropylmalate. The protein operates within amino-acid biosynthesis; L-leucine biosynthesis; L-leucine from 3-methyl-2-oxobutanoate: step 2/4. In terms of biological role, catalyzes the isomerization between 2-isopropylmalate and 3-isopropylmalate, via the formation of 2-isopropylmaleate. This chain is 3-isopropylmalate dehydratase large subunit, found in Corynebacterium diphtheriae (strain ATCC 700971 / NCTC 13129 / Biotype gravis).